Here is a 434-residue protein sequence, read N- to C-terminus: F-box/LRR-repeat protein 21 (434 aa).

Residues 39–85 (LLDWGTLPHHVILQIFQYLPLIDRARASSVCRRWNEVFHIPDLWRKF) form the F-box domain. 6 LRR repeats span residues 187 to 213 (DTPVDDPSLKILVANNSDTLRLLKMSS), 214 to 239 (CPHVSSDGILCVADHCQGLRELALNY), 242 to 265 (LSDEILLALSSETHVNLEHLRIDV), 322 to 347 (GRSVSRAILGRIGLNCPRLIELVVCA), 349 to 374 (GLLPLDSELIRIAKHCKNLTSLGLSE), and 375 to 400 (CEVSCSAFVEFVRLCGRRLTQLSIME).

Part of the SCF (SKP1-CUL1-F-box) E3 ubiquitin-protein ligase complex SCF(FBXL21) composed of CUL1, SKP1, RBX1 and FBXL21. Interacts with CRY1 and CRY2. Expressed in the hypothalamus, especially in the suprachiasmatic nucleus (SCN). Expression is driven by the core-clock. There is a pronounced diurnal and circadian expression rhythms rising rapidly at the start of the day and declining at the onset of the night.

It is found in the cytoplasm. It localises to the cytosol. The protein resides in the nucleus. It functions in the pathway protein modification; protein ubiquitination. Functionally, substrate-recognition component of the SCF(FBXL21) E3 ubiquitin ligase complex involved in circadian rhythm function. Plays a key role in the maintenance of both the speed and the robustness of the circadian clock oscillation. The SCF(FBXL21) complex mainly acts in the cytosol and mediates ubiquitination of CRY proteins (CRY1 and CRY2), leading to CRY proteins stabilization. The SCF(FBXL21) complex counteracts the activity of the SCF(FBXL3) complex and protects CRY proteins from degradation. Involved in the hypothalamic suprachiasmatic nucleus (SCN) clock regulating temporal organization of the daily activities. This Mus musculus (Mouse) protein is F-box/LRR-repeat protein 21 (Fbxl21).